Consider the following 363-residue polypeptide: Palmitoyltransferase ZDHHC9 (363 aa).

The Cytoplasmic portion of the chain corresponds to 1 to 35 (MSVMVVRKKVTRKWEKLPGRNTFCCDGRVMMARQK). The helical transmembrane segment at 36–56 (GIFYLTLFLILGTCTLFFAFE) threads the bilayer. Topologically, residues 57-63 (CRYLAVQ) are lumenal. Residues 64–84 (LSPAIPVFAAMLFLFSMATLL) traverse the membrane as a helical segment. The Cytoplasmic segment spans residues 85–183 (RTSFSDPGVI…NCVGKRNYRY (99 aa)). A DHHC domain is found at 139-189 (KYCYTCKIFRPPRASHCSICDNCVERFDHHCPWVGNCVGKRNYRYFYLFIL). The S-palmitoyl cysteine intermediate role is filled by C169. The helical transmembrane segment at 184–204 (FYLFILSLSLLTIYVFAFNIV) threads the bilayer. Topologically, residues 205 to 228 (YVALKSLKIGFLETLKETPGTVLE) are lumenal. Residues 229–249 (VLICFFTLWSVVGLTGFHTFL) traverse the membrane as a helical segment. The Cytoplasmic portion of the chain corresponds to 250-363 (VALNQTTNED…PPQEVTEAEK (114 aa)). Residues 303–363 (PLEESGSRPP…PPQEVTEAEK (61 aa)) form a disordered region. Residues 310 to 322 (RPPSTQEASTSLL) are compositionally biased toward polar residues. A compositionally biased stretch (pro residues) spans 345-355 (EMPPPEPPEPP).

The protein belongs to the DHHC palmitoyltransferase family. ERF2/ZDHHC9 subfamily. As to quaternary structure, interacts with GOLGA7.

The protein localises to the endoplasmic reticulum membrane. Its subcellular location is the golgi apparatus membrane. It catalyses the reaction L-cysteinyl-[protein] + hexadecanoyl-CoA = S-hexadecanoyl-L-cysteinyl-[protein] + CoA. Palmitoyltransferase that catalyzes the addition of palmitate onto various protein substrates, such as ADRB2, GSDMD, HRAS, NRAS and CGAS. The ZDHHC9-GOLGA7 complex is a palmitoyltransferase specific for HRAS and NRAS. May have a palmitoyltransferase activity toward the beta-2 adrenergic receptor/ADRB2 and therefore regulate G protein-coupled receptor signaling. Acts as a regulator of innate immunity by catalyzing palmitoylation of CGAS, thereby promoting CGAS homodimerization and cyclic GMP-AMP synthase activity. Activates pyroptosis by catalyzing palmitoylation of gasdermin-D (GSDMD), thereby promoting membrane translocation and pore formation of GSDMD. In Bos taurus (Bovine), this protein is Palmitoyltransferase ZDHHC9 (ZDHHC9).